A 334-amino-acid chain; its full sequence is Anthranilate phosphoribosyltransferase (334 aa).

Residues glycine 79, 82–83, serine 87, 89–92, 107–115, and serine 119 contribute to the 5-phospho-alpha-D-ribose 1-diphosphate site; these read GD, NIST, and KAGNRSISS. Glycine 79 lines the anthranilate pocket. Serine 91 serves as a coordination point for Mg(2+). Anthranilate is bound at residue asparagine 110. Arginine 165 serves as a coordination point for anthranilate. Residues aspartate 224 and glutamate 225 each coordinate Mg(2+).

It belongs to the anthranilate phosphoribosyltransferase family. In terms of assembly, homodimer. The cofactor is Mg(2+).

The enzyme catalyses N-(5-phospho-beta-D-ribosyl)anthranilate + diphosphate = 5-phospho-alpha-D-ribose 1-diphosphate + anthranilate. It functions in the pathway amino-acid biosynthesis; L-tryptophan biosynthesis; L-tryptophan from chorismate: step 2/5. Functionally, catalyzes the transfer of the phosphoribosyl group of 5-phosphorylribose-1-pyrophosphate (PRPP) to anthranilate to yield N-(5'-phosphoribosyl)-anthranilate (PRA). The chain is Anthranilate phosphoribosyltransferase from Streptococcus thermophilus (strain ATCC BAA-491 / LMD-9).